Reading from the N-terminus, the 193-residue chain is Oligoribonuclease (193 aa).

Residues 14 to 177 enclose the Exonuclease domain; that stretch reads LIWIDLEMTG…SDIYDSIAEL (164 aa). Tyrosine 135 is an active-site residue.

It belongs to the oligoribonuclease family.

Its subcellular location is the cytoplasm. In terms of biological role, 3'-to-5' exoribonuclease specific for small oligoribonucleotides. This chain is Oligoribonuclease, found in Xylella fastidiosa (strain Temecula1 / ATCC 700964).